Consider the following 445-residue polypeptide: Cyclic GMP-AMP phosphodiesterase SMPDL3A (445 aa).

A signal peptide spans 1–22; it reads MALPGNFLCCLLVAWLCDPGLG. Zn(2+) is bound by residues Asp-42 and His-44. Cys-59 and Cys-78 are joined by a disulfide. N-linked (GlcNAc...) asparagine glycosylation occurs at Asn-66. Asp-107 contributes to the Zn(2+) binding site. His-111 contributes to the ATP binding site. The N-linked (GlcNAc...) asparagine glycan is linked to Asn-128. Asn-148 is a binding site for Zn(2+). Residues Asn-148 and His-149 each contribute to the ATP site. 2 N-linked (GlcNAc...) asparagine glycosylation sites follow: Asn-219 and Asn-235. Zn(2+)-binding residues include His-249, His-290, and His-292. N-linked (GlcNAc...) asparagine glycans are attached at residues Asn-353 and Asn-364. 2 disulfide bridges follow: Cys-417-Cys-421 and Cys-427-Cys-440.

Belongs to the acid sphingomyelinase family. Monomer. Homodimer; homodimerizes following 2',3'-cGAMP-binding. It depends on Zn(2+) as a cofactor.

Its subcellular location is the secreted. It catalyses the reaction 2',3'-cGAMP + H2O = 5'-pGpA(2'-5') + H(+). The catalysed reaction is 5'-pGpA(2'-5') + H2O = 5'-GpA(2'-5') + phosphate. It carries out the reaction a ribonucleoside 5'-triphosphate + H2O = a ribonucleoside 5'-diphosphate + phosphate + H(+). The enzyme catalyses ATP + H2O = ADP + phosphate + H(+). Cyclic-nucleotide phosphodiesterase that acts as a negative regulator of innate immunity by mediating degradation of 2',3'-cGAMP, thereby inhibiting the cGAS-STING signaling. Specifically linearizes 2',3'-cGAMP into 2'5'-bond pGpA and further hydrolyzes pGpA to produce GpA. Also has in vitro nucleotide phosphodiesterase activity with nucleoside triphosphates, such as ATP. Has in vitro activity with p-nitrophenyl-TMP. Has lower activity with nucleoside diphosphates, and no activity with nucleoside monophosphates. Has in vitro activity with CDP-choline, giving rise to CMP and phosphocholine. Has in vitro activity with CDP-ethanolamine. Does not have sphingomyelin phosphodiesterase activity. The sequence is that of Cyclic GMP-AMP phosphodiesterase SMPDL3A (Smpdl3a) from Rattus norvegicus (Rat).